The chain runs to 509 residues: tRNA (guanine(37)-N(1))-methyltransferase (509 aa).

S-adenosyl-L-methionine contacts are provided by residues His-289, 327–328 (DL), 355–356 (DG), and Asn-387. Positions 478 to 509 (TRNPENHEDPPLKRQRTAEAFSDEKTQIVSNT) are disordered.

Belongs to the class I-like SAM-binding methyltransferase superfamily. TRM5/TYW2 family. As to quaternary structure, monomer.

The protein localises to the mitochondrion matrix. The protein resides in the nucleus. It is found in the cytoplasm. It carries out the reaction guanosine(37) in tRNA + S-adenosyl-L-methionine = N(1)-methylguanosine(37) in tRNA + S-adenosyl-L-homocysteine + H(+). In terms of biological role, involved in mitochondrial tRNA methylation. Specifically methylates the N1 position of guanosine-37 in various tRNAs. Methylation is not dependent on the nature of the nucleoside 5' of the target nucleoside. This is the first step in the biosynthesis of wybutosine (yW), a modified base adjacent to the anticodon of tRNAs and required for accurate decoding. This is tRNA (guanine(37)-N(1))-methyltransferase from Homo sapiens (Human).